We begin with the raw amino-acid sequence, 294 residues long: Mitochondrial HMG-box protein CIM1 (294 aa).

Residues 1–90 (MKATLLLKAQ…RLYYASFCQS (90 aa)) constitute a mitochondrion transit peptide. Residues 27–102 (NRTPYTAFQY…IDILNVSKIE (76 aa)) are HMG-box A. Residues 110-258 (PIPAMSEYLL…IQILQKNMDI (149 aa)) form an HMG-box B region.

The protein resides in the mitochondrion matrix. Functionally, mitochondrial HMG-box protein that limits the copy number of mitochondrial DNA (mtDNA), antagonizing HMG-box containing protein ABF2, a mtDNA packaging factor. This is Mitochondrial HMG-box protein CIM1 from Saccharomyces cerevisiae (strain ATCC 204508 / S288c) (Baker's yeast).